Here is a 203-residue protein sequence, read N- to C-terminus: Peptidyl-tRNA hydrolase (203 aa).

Tyrosine 18 provides a ligand contact to tRNA. The active-site Proton acceptor is histidine 23. TRNA contacts are provided by phenylalanine 69, asparagine 71, and asparagine 117.

It belongs to the PTH family. As to quaternary structure, monomer.

It localises to the cytoplasm. It catalyses the reaction an N-acyl-L-alpha-aminoacyl-tRNA + H2O = an N-acyl-L-amino acid + a tRNA + H(+). Functionally, hydrolyzes ribosome-free peptidyl-tRNAs (with 1 or more amino acids incorporated), which drop off the ribosome during protein synthesis, or as a result of ribosome stalling. In terms of biological role, catalyzes the release of premature peptidyl moieties from peptidyl-tRNA molecules trapped in stalled 50S ribosomal subunits, and thus maintains levels of free tRNAs and 50S ribosomes. In Prochlorococcus marinus subsp. pastoris (strain CCMP1986 / NIES-2087 / MED4), this protein is Peptidyl-tRNA hydrolase.